A 151-amino-acid polypeptide reads, in one-letter code: S-ribosylhomocysteine lyase (151 aa).

Fe cation-binding residues include histidine 54, histidine 58, and cysteine 121.

Belongs to the LuxS family. In terms of assembly, homodimer. The cofactor is Fe cation.

The catalysed reaction is S-(5-deoxy-D-ribos-5-yl)-L-homocysteine = (S)-4,5-dihydroxypentane-2,3-dione + L-homocysteine. Its function is as follows. Involved in the synthesis of autoinducer 2 (AI-2) which is secreted by bacteria and is used to communicate both the cell density and the metabolic potential of the environment. The regulation of gene expression in response to changes in cell density is called quorum sensing. Catalyzes the transformation of S-ribosylhomocysteine (RHC) to homocysteine (HC) and 4,5-dihydroxy-2,3-pentadione (DPD). This chain is S-ribosylhomocysteine lyase, found in Clostridium botulinum (strain Alaska E43 / Type E3).